The primary structure comprises 182 residues: Putative manganese efflux pump MntP (182 aa).

A run of 6 helical transmembrane segments spans residues 6-26 (LIPL…VSLG), 37-57 (ILYI…IGMV), 71-91 (HFAG…SSIL), 101-121 (IGIS…SVGL), 131-151 (IITI…GLFI), and 162-182 (YGEI…LFPI).

It belongs to the MntP (TC 9.B.29) family.

It is found in the cell membrane. In terms of biological role, probably functions as a manganese efflux pump. This Bacillus cereus (strain ATCC 10987 / NRS 248) protein is Putative manganese efflux pump MntP.